Consider the following 245-residue polypeptide: Type III pantothenate kinase (245 aa).

6–13 (DVGNTAMK) provides a ligand contact to ATP. Residues tyrosine 93 and 100–103 (GVDR) each bind substrate. Aspartate 102 acts as the Proton acceptor in catalysis. Aspartate 121 is a binding site for K(+). Serine 124 contributes to the ATP binding site. Threonine 175 provides a ligand contact to substrate.

The protein belongs to the type III pantothenate kinase family. In terms of assembly, homodimer. The cofactor is NH4(+). K(+) is required as a cofactor.

The protein localises to the cytoplasm. It carries out the reaction (R)-pantothenate + ATP = (R)-4'-phosphopantothenate + ADP + H(+). Its pathway is cofactor biosynthesis; coenzyme A biosynthesis; CoA from (R)-pantothenate: step 1/5. Its function is as follows. Catalyzes the phosphorylation of pantothenate (Pan), the first step in CoA biosynthesis. The sequence is that of Type III pantothenate kinase from Alcanivorax borkumensis (strain ATCC 700651 / DSM 11573 / NCIMB 13689 / SK2).